Reading from the N-terminus, the 84-residue chain is Cytochrome b559 subunit alpha (84 aa).

A helical membrane pass occupies residues 22-36 (VIHSITIPALFVAGW). Residue histidine 24 participates in heme binding.

The protein belongs to the PsbE/PsbF family. As to quaternary structure, heterodimer of an alpha subunit and a beta subunit. PSII is composed of 1 copy each of membrane proteins PsbA, PsbB, PsbC, PsbD, PsbE, PsbF, PsbH, PsbI, PsbJ, PsbK, PsbL, PsbM, PsbT, PsbX, PsbY, PsbZ, Psb30/Ycf12, at least 3 peripheral proteins of the oxygen-evolving complex and a large number of cofactors. It forms dimeric complexes. Requires heme b as cofactor.

It is found in the plastid. Its subcellular location is the chloroplast thylakoid membrane. This b-type cytochrome is tightly associated with the reaction center of photosystem II (PSII). PSII is a light-driven water:plastoquinone oxidoreductase that uses light energy to abstract electrons from H(2)O, generating O(2) and a proton gradient subsequently used for ATP formation. It consists of a core antenna complex that captures photons, and an electron transfer chain that converts photonic excitation into a charge separation. The chain is Cytochrome b559 subunit alpha from Porphyra purpurea (Red seaweed).